A 447-amino-acid chain; its full sequence is Aladin (447 aa).

The segment at 49-69 is disordered; the sequence is STPSSLQENEGQENGDKASGE. WD repeat units lie at residues 97 to 138, 142 to 181, 210 to 250, and 252 to 291; these read LSEI…EPCI, DSQR…NMAL, QNDE…GTPI, and RGLG…SEPW.

In terms of assembly, part of the nuclear pore complex (NPC). The NPC has an eight-fold symmetrical structure comprising a central transport channel and two rings, the cytoplasmic and nuclear rings, to which eight filaments are attached. The cytoplasmic filaments have loose ends, while the nuclear filaments are joined in a distal ring, forming a nuclear basket. NPCs are highly dynamic in configuration and composition, and can be devided in 3 subcomplexes, the NUP62 subcomplex, the NUP107-160 subcomplex and the NUP93 subcomplex, containing approximately 30 different nucleoporin proteins.

Its subcellular location is the nucleus envelope. It is found in the nucleus. It localises to the nuclear pore complex. This chain is Aladin, found in Arabidopsis thaliana (Mouse-ear cress).